The following is a 237-amino-acid chain: MQKLSEVYRGKAKTVYATENPDFLVLEFRNDTSALDGKRIEQFYRKGIINNQFNHFIMLKLEEAGIPTQLERLLSENELLVKKLDMFPLESVIRNRAAGSLEKRLALQEGLLLDPPIYDLFLKNDSLHDPIVTESYCETFGWASTAHLVKMKELSYKVNDVLSPLFDAADLILVDFKLEFGLFKGEVILGDEFSPDGCRIWDKTTLNKLDKDRFRQNLGGLIEAYEEVAKRIGVPLN.

The protein belongs to the SAICAR synthetase family.

It catalyses the reaction 5-amino-1-(5-phospho-D-ribosyl)imidazole-4-carboxylate + L-aspartate + ATP = (2S)-2-[5-amino-1-(5-phospho-beta-D-ribosyl)imidazole-4-carboxamido]succinate + ADP + phosphate + 2 H(+). It participates in purine metabolism; IMP biosynthesis via de novo pathway; 5-amino-1-(5-phospho-D-ribosyl)imidazole-4-carboxamide from 5-amino-1-(5-phospho-D-ribosyl)imidazole-4-carboxylate: step 1/2. The protein is Phosphoribosylaminoimidazole-succinocarboxamide synthase of Hamiltonella defensa subsp. Acyrthosiphon pisum (strain 5AT).